We begin with the raw amino-acid sequence, 292 residues long: Ribosomal protein L11 methyltransferase (292 aa).

S-adenosyl-L-methionine is bound by residues threonine 136, glycine 159, aspartate 181, and asparagine 228.

Belongs to the methyltransferase superfamily. PrmA family.

It is found in the cytoplasm. The enzyme catalyses L-lysyl-[protein] + 3 S-adenosyl-L-methionine = N(6),N(6),N(6)-trimethyl-L-lysyl-[protein] + 3 S-adenosyl-L-homocysteine + 3 H(+). Its function is as follows. Methylates ribosomal protein L11. The protein is Ribosomal protein L11 methyltransferase of Rhizobium johnstonii (strain DSM 114642 / LMG 32736 / 3841) (Rhizobium leguminosarum bv. viciae).